The primary structure comprises 542 residues: Chaperonin GroEL 1 (542 aa).

ATP-binding positions include 29 to 32 (TLGP), 86 to 90 (DGTTT), Gly-413, 477 to 479 (NAA), and Asp-493.

It belongs to the chaperonin (HSP60) family. In terms of assembly, forms a cylinder of 14 subunits composed of two heptameric rings stacked back-to-back. Interacts with the co-chaperonin GroES.

It localises to the cytoplasm. The enzyme catalyses ATP + H2O + a folded polypeptide = ADP + phosphate + an unfolded polypeptide.. Together with its co-chaperonin GroES, plays an essential role in assisting protein folding. The GroEL-GroES system forms a nano-cage that allows encapsulation of the non-native substrate proteins and provides a physical environment optimized to promote and accelerate protein folding. This chain is Chaperonin GroEL 1, found in Kineococcus radiotolerans (strain ATCC BAA-149 / DSM 14245 / SRS30216).